The sequence spans 110 residues: NADH dehydrogenase [ubiquinone] iron-sulfur protein 6, mitochondrial (110 aa).

A mitochondrion-targeting transit peptide spans 1–22; that stretch reads MASNLLKALIRSQILPSSRRNF.

It belongs to the complex I NDUFS6 subunit family. Complex I is composed of at least 49 different subunits. This is a component of the iron-sulfur (IP) fragment of the enzyme.

It is found in the mitochondrion inner membrane. Functionally, accessory subunit of the mitochondrial membrane respiratory chain NADH dehydrogenase (Complex I), that is believed not to be involved in catalysis. Complex I functions in the transfer of electrons from NADH to the respiratory chain. The immediate electron acceptor for the enzyme is believed to be ubiquinone. This chain is NADH dehydrogenase [ubiquinone] iron-sulfur protein 6, mitochondrial, found in Arabidopsis thaliana (Mouse-ear cress).